The chain runs to 125 residues: NADH-ubiquinone oxidoreductase chain 1 (125 aa).

The next 3 membrane-spanning stretches (helical) occupy residues 5 to 25 (IFAF…VAFL), 74 to 94 (YLFF…WNFM), and 105 to 125 (LSLL…LGSG).

It belongs to the complex I subunit 1 family.

It localises to the mitochondrion inner membrane. The catalysed reaction is a ubiquinone + NADH + 5 H(+)(in) = a ubiquinol + NAD(+) + 4 H(+)(out). Its function is as follows. Core subunit of the mitochondrial membrane respiratory chain NADH dehydrogenase (Complex I) that is believed to belong to the minimal assembly required for catalysis. Complex I functions in the transfer of electrons from NADH to the respiratory chain. The immediate electron acceptor for the enzyme is believed to be ubiquinone. This chain is NADH-ubiquinone oxidoreductase chain 1 (ND1), found in Arbacia lixula (Black urchin).